A 130-amino-acid polypeptide reads, in one-letter code: Small ribosomal subunit protein uS11 (130 aa).

It belongs to the universal ribosomal protein uS11 family. Part of the 30S ribosomal subunit. Interacts with proteins S7 and S18. Binds to IF-3.

Located on the platform of the 30S subunit, it bridges several disparate RNA helices of the 16S rRNA. Forms part of the Shine-Dalgarno cleft in the 70S ribosome. The polypeptide is Small ribosomal subunit protein uS11 (Nautilia profundicola (strain ATCC BAA-1463 / DSM 18972 / AmH)).